The following is a 1050-amino-acid chain: DNA-directed RNA polymerase subunit beta (1050 aa).

The protein belongs to the RNA polymerase beta chain family. In plastids the minimal PEP RNA polymerase catalytic core is composed of four subunits: alpha, beta, beta', and beta''. When a (nuclear-encoded) sigma factor is associated with the core the holoenzyme is formed, which can initiate transcription (Potential).

It localises to the plastid. Its subcellular location is the apicoplast. The catalysed reaction is RNA(n) + a ribonucleoside 5'-triphosphate = RNA(n+1) + diphosphate. Its function is as follows. DNA-dependent RNA polymerase catalyzes the transcription of DNA into RNA using the four ribonucleoside triphosphates as substrates. In Neospora caninum (Coccidian parasite), this protein is DNA-directed RNA polymerase subunit beta (rpoB).